We begin with the raw amino-acid sequence, 277 residues long: Large ribosomal subunit protein uL2 (277 aa).

Residues 215–263 (LGRKPHQRGSAMNPVDHPHGGGEGRTGAGRVPVSPWGQPAKGLKTRKKR) are disordered.

It belongs to the universal ribosomal protein uL2 family. In terms of assembly, part of the 50S ribosomal subunit. Forms a bridge to the 30S subunit in the 70S ribosome.

In terms of biological role, one of the primary rRNA binding proteins. Required for association of the 30S and 50S subunits to form the 70S ribosome, for tRNA binding and peptide bond formation. It has been suggested to have peptidyltransferase activity; this is somewhat controversial. Makes several contacts with the 16S rRNA in the 70S ribosome. This Deinococcus geothermalis (strain DSM 11300 / CIP 105573 / AG-3a) protein is Large ribosomal subunit protein uL2.